The sequence spans 295 residues: Glutamate-binding protein GluB (295 aa).

The N-terminal stretch at 1–26 (MSAKRTFTRIGAILGATALAGVTLTA) is a signal peptide. A lipid anchor (N-palmitoyl cysteine) is attached at Cys-27. Cys-27 is lipidated: S-diacylglycerol cysteine.

It belongs to the bacterial solute-binding protein 3 family. As to quaternary structure, the complex is composed of two ATP-binding proteins (GluA), two transmembrane proteins (GluC and GluD) and a solute-binding protein (GluB).

Its subcellular location is the cell membrane. Binding of glutamate or asparatate induces a higher thermal stability of the protein structure. In terms of biological role, part of the ABC transporter complex GluABCD involved in glutamate uptake. Binds glutamate with a high affinity. Also binds aspartate with high affinity, suggesting that GluB could be involved in the transport of both amino acid residues into the cell. This is Glutamate-binding protein GluB from Corynebacterium glutamicum (strain ATCC 13032 / DSM 20300 / JCM 1318 / BCRC 11384 / CCUG 27702 / LMG 3730 / NBRC 12168 / NCIMB 10025 / NRRL B-2784 / 534).